Here is a 121-residue protein sequence, read N- to C-terminus: Large ribosomal subunit protein uL14 (121 aa).

It belongs to the universal ribosomal protein uL14 family. As to quaternary structure, part of the 50S ribosomal subunit. Forms a cluster with proteins L3 and L19. In the 70S ribosome, L14 and L19 interact and together make contacts with the 16S rRNA in bridges B5 and B8.

Its function is as follows. Binds to 23S rRNA. Forms part of two intersubunit bridges in the 70S ribosome. The sequence is that of Large ribosomal subunit protein uL14 from Akkermansia muciniphila (strain ATCC BAA-835 / DSM 22959 / JCM 33894 / BCRC 81048 / CCUG 64013 / CIP 107961 / Muc).